The primary structure comprises 142 residues: Large ribosomal subunit protein uL11 (142 aa).

This sequence belongs to the universal ribosomal protein uL11 family. In terms of assembly, part of the ribosomal stalk of the 50S ribosomal subunit. Interacts with L10 and the large rRNA to form the base of the stalk. L10 forms an elongated spine to which L12 dimers bind in a sequential fashion forming a multimeric L10(L12)X complex. Post-translationally, one or more lysine residues are methylated.

In terms of biological role, forms part of the ribosomal stalk which helps the ribosome interact with GTP-bound translation factors. This is Large ribosomal subunit protein uL11 from Shewanella sediminis (strain HAW-EB3).